The chain runs to 513 residues: Sterol 14-alpha demethylase rstn2 (513 aa).

Residues 3–23 (WPLIGAYALLAFVAIIALNVT) form a helical membrane-spanning segment. Cys453 contacts heme.

Belongs to the cytochrome P450 family. Heme serves as cofactor.

The protein localises to the membrane. It catalyses the reaction a 14alpha-methyl steroid + 3 reduced [NADPH--hemoprotein reductase] + 3 O2 = a Delta(14) steroid + formate + 3 oxidized [NADPH--hemoprotein reductase] + 4 H2O + 4 H(+). The catalysed reaction is a 14alpha-methyl steroid + reduced [NADPH--hemoprotein reductase] + O2 = a 14alpha-hydroxymethyl steroid + oxidized [NADPH--hemoprotein reductase] + H2O + H(+). The enzyme catalyses a 14alpha-hydroxymethyl steroid + reduced [NADPH--hemoprotein reductase] + O2 = a 14alpha-formyl steroid + oxidized [NADPH--hemoprotein reductase] + 2 H2O + H(+). It carries out the reaction a 14alpha-formyl steroid + reduced [NADPH--hemoprotein reductase] + O2 = a Delta(14) steroid + formate + oxidized [NADPH--hemoprotein reductase] + H2O + 2 H(+). It catalyses the reaction lanosterol + 3 reduced [NADPH--hemoprotein reductase] + 3 O2 = 4,4-dimethyl-5alpha-cholesta-8,14,24-trien-3beta-ol + formate + 3 oxidized [NADPH--hemoprotein reductase] + 4 H2O + 4 H(+). The catalysed reaction is lanosterol + reduced [NADPH--hemoprotein reductase] + O2 = 32-hydroxylanosterol + oxidized [NADPH--hemoprotein reductase] + H2O + H(+). The enzyme catalyses 32-hydroxylanosterol + reduced [NADPH--hemoprotein reductase] + O2 = 32-oxolanosterol + oxidized [NADPH--hemoprotein reductase] + 2 H2O + H(+). It carries out the reaction 32-oxolanosterol + reduced [NADPH--hemoprotein reductase] + O2 = 4,4-dimethyl-5alpha-cholesta-8,14,24-trien-3beta-ol + formate + oxidized [NADPH--hemoprotein reductase] + H2O + 2 H(+). It catalyses the reaction eburicol + 3 reduced [NADPH--hemoprotein reductase] + 3 O2 = 14-demethyleburicol + formate + 3 oxidized [NADPH--hemoprotein reductase] + 4 H2O + 4 H(+). The catalysed reaction is eburicol + reduced [NADPH--hemoprotein reductase] + O2 = 32-hydroxyeburicol + oxidized [NADPH--hemoprotein reductase] + H2O + H(+). The enzyme catalyses 32-hydroxyeburicol + reduced [NADPH--hemoprotein reductase] + O2 = 32-oxoeburicol + oxidized [NADPH--hemoprotein reductase] + 2 H2O + H(+). It carries out the reaction 32-oxoeburicol + reduced [NADPH--hemoprotein reductase] + O2 = 14-demethyleburicol + formate + oxidized [NADPH--hemoprotein reductase] + H2O + 2 H(+). Its pathway is steroid biosynthesis; sterol biosynthesis. Sterol 14-alpha demethylase; part of the gene cluster that mediates the biosynthesis of the tetrahydropyranyl antifungal agent restricticin that acts as an inhibitor of CYP51 and blocks the ergosterol biosynthesis. Sterol 14-alpha-demethylase plays a critical role in the biosynthesis of ergosterol, the major sterol component in fungal membranes that participates in a variety of functions. Rtsn2 acts as a self-resistant CYP51 that contains mutations found in CYP51s isolated from azole resistance strains and that is not inhibited by the final product of the cluster, restricticin. The polypeptide is Sterol 14-alpha demethylase rstn2 (Aspergillus nomiae NRRL (strain ATCC 15546 / NRRL 13137 / CBS 260.88 / M93)).